Here is an 82-residue protein sequence, read N- to C-terminus: Small ribosomal subunit protein bS16 (82 aa).

The protein belongs to the bacterial ribosomal protein bS16 family.

The polypeptide is Small ribosomal subunit protein bS16 (Clostridium botulinum (strain ATCC 19397 / Type A)).